Reading from the N-terminus, the 534-residue chain is MVSEKCVAAFFLLQLCWAGCGFCSKVLVWPCDMSHWLNLKTILEELGARGHEVTVLKYPSIIIDQSKRIPLHFENIPLLYEIETAENRLNEIANLAVNVIPNLSLWEAAKTLQDFFLQVTGDFESICRSVLYNQKFMDKLRDAQYDVVVIDPVVPCGELVAEVLQIPFVYTLRFSMGYYMEKHCGQLPIPLSYVPVVMSELTDNMTFTERVKNMMFSLLFEYWLQQYDFAFWDQFYSETLGRPTTFCKTVGKADIWLIRTYWDVEFPRPYLPNFEFVGGLHCKPAKPLPKEMEEFVQSSGEHGVVVFSLGSMVKNLTEEKANLIASVLAQIPQKVLWRYSGKKPATLGSNTRLFNWIPQNDLLGHPKTKAFITHGGTNGIYEAIYHGVPMVGVPMLGDQPHNIAHMEAKGAALKVSISTMTSTDLLSAVRAVINEPSYKENAMRLSRIHHDQPVKPLDRAVFWIEFVMRHKGAKHLRVAAHDLSWFQYHSLDVIGFLLLCVVTLTFIITKFCLFVCQKLYMKESKKMGNRKKKN.

Positions 1-18 (MVSEKCVAAFFLLQLCWA) are cleaved as a signal peptide. Residues 19–493 (GCGFCSKVLV…SWFQYHSLDV (475 aa)) are Extracellular-facing. Residue asparagine 102 is glycosylated (N-linked (GlcNAc...) asparagine). An N6-succinyllysine modification is found at lysine 135. Residue asparagine 204 is glycosylated (N-linked (GlcNAc...) asparagine). Residues 494-514 (IGFLLLCVVTLTFIITKFCLF) traverse the membrane as a helical segment. Residues 515–534 (VCQKLYMKESKKMGNRKKKN) are Cytoplasmic-facing.

The protein belongs to the UDP-glycosyltransferase family. As to expression, highly expressed in liver, with lower levels in duodenum and jejunum.

The protein localises to the membrane. It carries out the reaction glucuronate acceptor + UDP-alpha-D-glucuronate = acceptor beta-D-glucuronoside + UDP + H(+). Its function is as follows. UDP-glucuronosyltransferases catalyze phase II biotransformation reactions in which lipophilic substrates are conjugated with glucuronic acid to increase water solubility and enhance excretion. They are of major importance in the conjugation and subsequent elimination of potentially toxic xenobiotics and endogenous compounds. In Mus musculus (Mouse), this protein is UDP-glucuronosyltransferase 2A3 (Ugt2a3).